The sequence spans 240 residues: Phosducin-like protein 2 (240 aa).

Residues 38-201 (QQEAMVKPYE…LEWKLSEVGA (164 aa)) enclose the Phosducin domain. Residues 89 to 240 (FGELREISGN…DSSGSDTEAK (152 aa)) are thioredoxin fold.

This sequence belongs to the phosducin family. Interacts with the CCT chaperonin complex and actin. Testis-specific (at protein level).

The protein resides in the endoplasmic reticulum. Essential for male fertility, spermiogenesis and acrosome formation. The chain is Phosducin-like protein 2 (Pdcl2) from Mus musculus (Mouse).